Consider the following 1032-residue polypeptide: ATPase MORC2 (1032 aa).

A2 carries the post-translational modification N-acetylalanine. ATP is bound by residues N39, 87 to 89 (SAK), and 99 to 105 (QYGNGLK). Residue N39 coordinates Mg(2+). The stretch at 282 to 362 (SRFKTRAEQE…KEAKQRALKE (81 aa)) forms a coiled coil. ATP is bound at residue K427. A CW-type zinc finger spans residues 490 to 544 (AMEIPTTIQCDLCLKWRTLPFQLSSVEKDYPDTWVCSMNPDPEQDRCEASEQKQK). Zn(2+) is bound by residues C499, C502, C525, and C536. 2 disordered regions span residues 530–563 (DPEQ…KQKQ) and 577–793 (ALQK…RAQK). 2 stretches are compositionally biased toward basic and acidic residues: residues 532-543 (EQDRCEASEQKQ) and 550-563 (FRKD…KQKQ). Positions 547–584 (LGTFRKDMKTQEEKQKQLTEKIRQQQEKLEALQKTTPI) form a coiled coil. T582 is subject to Phosphothreonine. Phosphoserine occurs at positions 602 and 615. Positions 627–638 (SRPPSLPTPRPA) are enriched in pro residues. A Glycyl lysine isopeptide (Lys-Gly) (interchain with G-Cter in SUMO2) cross-link involves residue K652. The segment covering 690–704 (PLVQQLSPSLLPNSK) has biased composition (low complexity). Phosphoserine is present on S696. A Glycyl lysine isopeptide (Lys-Gly) (interchain with G-Cter in SUMO2) cross-link involves residue K704. S705 is subject to Phosphoserine. Over residues 711–720 (SPKVIKTPVV) the composition is skewed to low complexity. K716 participates in a covalent cross-link: Glycyl lysine isopeptide (Lys-Gly) (interchain with G-Cter in SUMO2). 2 positions are modified to phosphoserine: S725 and S730. T733 is subject to Phosphothreonine. S739 is subject to Phosphoserine; by PAK1. The stretch at 741–761 (AVSDEEEVEEEAERRKERCKR) forms a coiled coil. S743 carries the post-translational modification Phosphoserine. Residues 765–774 (VVKEEKKDSN) show a composition bias toward basic and acidic residues. A Glycyl lysine isopeptide (Lys-Gly) (interchain with G-Cter in SUMO2) cross-link involves residue K767. Residues S777 and S779 each carry the phosphoserine modification. Residue K819 forms a Glycyl lysine isopeptide (Lys-Gly) (interchain with G-Cter in SUMO2) linkage. Residues 850-870 (RLMKPPSPEHQSLDTQQEGGE) are disordered. K932 participates in a covalent cross-link: Glycyl lysine isopeptide (Lys-Gly) (interchain with G-Cter in SUMO2). Positions 966–1016 (QSRADSRAKASEESLRTSERKLRETEEKLQKLRTNIVALLQKVQEDIDINT) form a coiled coil.

As to quaternary structure, homodimerizes upon ATP-binding and dissociate upon ATP hydrolysis; homodimerization is required for gene silencing. Interacts with HDAC4. Interacts with ACLY. Interacts with TASOR and MPHOSPH8; the interactions associate MORC2 with the HUSH complex which recruits MORC2 to heterochromatic loci. Post-translationally, phosphorylated by PAK1 at Ser-739 upon DNA damage. Phosphorylation is required for ATPase activity and recruitment to damaged chromatin. As to expression, highly expressed in smooth muscle, pancreas and testis.

The protein localises to the nucleus. The protein resides in the cytoplasm. It localises to the cytosol. Its subcellular location is the chromosome. It is found in the nucleus matrix. It catalyses the reaction ATP + H2O = ADP + phosphate + H(+). Its activity is regulated as follows. ATPase activity is dependent of phosphorylation by PAK1 and presence of DNA. Essential for epigenetic silencing by the HUSH (human silencing hub) complex. Recruited by HUSH to target site in heterochromatin, the ATPase activity and homodimerization are critical for HUSH-mediated silencing. Represses germ cell-related genes and L1 retrotransposons in collaboration with SETDB1 and the HUSH complex, the silencing is dependent of repressive epigenetic modifications, such as H3K9me3 mark. Silencing events often occur within introns of transcriptionally active genes, and lead to the down-regulation of host gene expression. During DNA damage response, regulates chromatin remodeling through ATP hydrolysis. Upon DNA damage, is phosphorylated by PAK1, both colocalize to chromatin and induce H2AX expression. ATPase activity is required and dependent of phosphorylation by PAK1 and presence of DNA. Recruits histone deacetylases, such as HDAC4, to promoter regions, causing local histone H3 deacetylation and transcriptional repression of genes such as CA9. Exhibits a cytosolic function in lipogenesis, adipogenic differentiation, and lipid homeostasis by increasing the activity of ACLY, possibly preventing its dephosphorylation. This Homo sapiens (Human) protein is ATPase MORC2.